A 308-amino-acid chain; its full sequence is tRNA dimethylallyltransferase (308 aa).

Glycine 9–threonine 16 lines the ATP pocket. Threonine 11–threonine 16 is a binding site for substrate. 2 interaction with substrate tRNA regions span residues aspartate 34 to glutamine 37 and glutamine 158 to arginine 162.

This sequence belongs to the IPP transferase family. In terms of assembly, monomer. The cofactor is Mg(2+).

It carries out the reaction adenosine(37) in tRNA + dimethylallyl diphosphate = N(6)-dimethylallyladenosine(37) in tRNA + diphosphate. Functionally, catalyzes the transfer of a dimethylallyl group onto the adenine at position 37 in tRNAs that read codons beginning with uridine, leading to the formation of N6-(dimethylallyl)adenosine (i(6)A). This is tRNA dimethylallyltransferase from Maricaulis maris (strain MCS10) (Caulobacter maris).